The primary structure comprises 62 residues: Protein DsrB (62 aa).

Belongs to the DsrB family.

The protein is Protein DsrB of Citrobacter koseri (strain ATCC BAA-895 / CDC 4225-83 / SGSC4696).